A 345-amino-acid chain; its full sequence is MNTDDFDYELDEKFIAQTPLDKRDESKLMVMDRFNGNTEIKKFYNIIDYLNPGDVLVCNNTRVIPARLFGHRPEKEEKIEVLLLQQTEDKWECLVKPGKKMKLNQVIEFSDSVSAKVVDITEDGSRILKFEYEGIFEERLDELGNMPLPPYIKEKLNDKERYQTVYSKHNGSAAAPTAGLHFTNELLEKIKDKGIYVVFLTLHVGLGTFRPVKVDDVKDHHMHSEYYTISQETVDIINRQKSKGHNIIAVGTTSVRTLETVTHNNNSKLVAESGWTDIFIYPGFEFNIVDSLITNFHLPKSTLMMLVSAFSKKEYIFDAYEKAKQNDFRFFSFGDAMFINGGRNV.

It belongs to the QueA family. As to quaternary structure, monomer.

It localises to the cytoplasm. It catalyses the reaction 7-aminomethyl-7-carbaguanosine(34) in tRNA + S-adenosyl-L-methionine = epoxyqueuosine(34) in tRNA + adenine + L-methionine + 2 H(+). It functions in the pathway tRNA modification; tRNA-queuosine biosynthesis. Functionally, transfers and isomerizes the ribose moiety from AdoMet to the 7-aminomethyl group of 7-deazaguanine (preQ1-tRNA) to give epoxyqueuosine (oQ-tRNA). The protein is S-adenosylmethionine:tRNA ribosyltransferase-isomerase of Finegoldia magna (strain ATCC 29328 / DSM 20472 / WAL 2508) (Peptostreptococcus magnus).